Here is a 522-residue protein sequence, read N- to C-terminus: Cytochrome P450 26C1 (522 aa).

Residues 9–29 (LSVLGAAGTALLCAGLLLSLA) traverse the membrane as a helical segment. A heme-binding site is contributed by Cys459.

The protein belongs to the cytochrome P450 family. Requires heme as cofactor. Detected in most tissues at very low level.

It localises to the membrane. The enzyme catalyses an organic molecule + reduced [NADPH--hemoprotein reductase] + O2 = an alcohol + oxidized [NADPH--hemoprotein reductase] + H2O + H(+). The catalysed reaction is all-trans-retinoate + reduced [NADPH--hemoprotein reductase] + O2 = all-trans-4-hydroxyretinoate + oxidized [NADPH--hemoprotein reductase] + H2O + H(+). It catalyses the reaction all-trans-4-hydroxyretinoate + reduced [NADPH--hemoprotein reductase] + O2 = all-trans-4-oxoretinoate + oxidized [NADPH--hemoprotein reductase] + 2 H2O + H(+). It carries out the reaction 9-cis-retinoate + reduced [NADPH--hemoprotein reductase] + O2 = 9-cis-4-hydroxyretinoate + oxidized [NADPH--hemoprotein reductase] + H2O + H(+). The enzyme catalyses 9-cis-4-hydroxyretinoate + reduced [NADPH--hemoprotein reductase] + O2 = 9-cis-4-oxoretinoate + oxidized [NADPH--hemoprotein reductase] + 2 H2O + H(+). The catalysed reaction is all-trans-4-hydroxy-13,14-dihydroretinoate + reduced [NADPH--hemoprotein reductase] + O2 = all-trans-4-oxo-13,14-dihydroretinoate + oxidized [NADPH--hemoprotein reductase] + 2 H2O + H(+). It catalyses the reaction all-trans-13,14-dihydroretinoate + reduced [NADPH--hemoprotein reductase] + O2 = all-trans-4-hydroxy-13,14-dihydroretinoate + oxidized [NADPH--hemoprotein reductase] + H2O + H(+). In terms of biological role, a cytochrome P450 monooxygenase involved in the metabolism of retinoates (RAs), the active metabolites of vitamin A, and critical signaling molecules in animals. RAs exist as at least four different isomers: all-trans-RA (atRA), 9-cis-RA, 13-cis-RA, and 9,13-dicis-RA, where atRA is considered to be the biologically active isomer, although 9-cis-RA and 13-cis-RA also have activity. Catalyzes the oxidation of atRA primarily at C-4. Oxidation of atRA limits its biological activity and initiates a degradative process leading to its eventual elimination, thereby contributes to the regulation of atRA homeostasis and signaling. Able to metabolize other RAs such as 9-cis with high efficiency. Can oxidize all-trans-13,14-dihydroretinoate (DRA) to metabolites which could include all-trans-4-oxo-DRA, all-trans-4-hydroxy-DRA, all-trans-5,8-epoxy-DRA, and all-trans-18-hydroxy-DRA. Shares sequence similarity with other CYP26 family members, but has higher affinity to 9-cis-RA and is much less sensitive to the inhibitory effects of ketoconazole. In cooperation with Cyp26a1, contributes to the CNS patterning and the development of regions of higher visual acuity. This is Cytochrome P450 26C1 (CYP26C1) from Homo sapiens (Human).